A 764-amino-acid polypeptide reads, in one-letter code: PFL-like enzyme TdcE (764 aa).

A PFL domain is found at 7–629 (TSDKLYADAW…KTGNTPDGRR (623 aa)). C423 functions as the S-acetylcysteine intermediate in the catalytic mechanism. Catalysis depends on C424, which acts as the Cysteine radical intermediate. The segment at 622–645 (GNTPDGRRAGTPFAPGANPMHGRD) is disordered. The Glycine radical domain maps to 636–764 (PGANPMHGRD…VISRTFTQAL (129 aa)). Residue G739 is modified to Glycine radical.

Belongs to the glycyl radical enzyme (GRE) family. PFL subfamily.

The protein resides in the cytoplasm. It catalyses the reaction 2-oxobutanoate + CoA = propanoyl-CoA + formate. The catalysed reaction is formate + acetyl-CoA = pyruvate + CoA. It participates in amino-acid degradation; L-threonine degradation via propanoate pathway; propanoate from L-threonine: step 2/4. Its activity is regulated as follows. Dependent on PFL-activase. In terms of biological role, catalyzes the cleavage of 2-ketobutyrate to propionyl-CoA and formate. It can also use pyruvate as substrate. This Escherichia coli (strain K12) protein is PFL-like enzyme TdcE (tdcE).